A 347-amino-acid polypeptide reads, in one-letter code: NADH-ubiquinone oxidoreductase chain 2 (347 aa).

11 helical membrane-spanning segments follow: residues 3-23 (PLIF…VMTT), 25-45 (HWVM…PILM), 59-79 (YFLT…INLV), 96-116 (IIMT…FWVP), 122-142 (VQLS…MSIL), 149-169 (INLD…GWGG), 178-198 (IMAY…VYNP), 200-220 (MALL…MMLM), 240-260 (LTTA…LSGF), 276-296 (MIMP…YMRL), and 326-346 (LSPL…LALL).

The protein belongs to the complex I subunit 2 family. As to quaternary structure, core subunit of respiratory chain NADH dehydrogenase (Complex I) which is composed of 45 different subunits. Interacts with TMEM242.

Its subcellular location is the mitochondrion inner membrane. The enzyme catalyses a ubiquinone + NADH + 5 H(+)(in) = a ubiquinol + NAD(+) + 4 H(+)(out). In terms of biological role, core subunit of the mitochondrial membrane respiratory chain NADH dehydrogenase (Complex I) which catalyzes electron transfer from NADH through the respiratory chain, using ubiquinone as an electron acceptor. Essential for the catalytic activity and assembly of complex I. The polypeptide is NADH-ubiquinone oxidoreductase chain 2 (Nyctimene albiventer (Common tube-nosed fruit bat)).